The chain runs to 146 residues: Aspartate carbamoyltransferase regulatory chain (146 aa).

The Zn(2+) site is built by cysteine 102, cysteine 107, cysteine 131, and cysteine 134.

The protein belongs to the PyrI family. Contains catalytic and regulatory chains. Requires Zn(2+) as cofactor.

Involved in allosteric regulation of aspartate carbamoyltransferase. The chain is Aspartate carbamoyltransferase regulatory chain from Clostridium acetobutylicum (strain ATCC 824 / DSM 792 / JCM 1419 / IAM 19013 / LMG 5710 / NBRC 13948 / NRRL B-527 / VKM B-1787 / 2291 / W).